The chain runs to 509 residues: 5-OH-xanthotoxin synthase (509 aa).

A helical transmembrane segment spans residues Ala-5–His-25. The substrate specificity stretch occupies residues Thr-368–Ile-373. A heme-binding site is contributed by Cys-449.

Belongs to the cytochrome P450 family. Requires heme as cofactor.

Its subcellular location is the microsome membrane. The enzyme catalyses xanthotoxin + reduced [NADPH--hemoprotein reductase] + O2 = 5-hydroxyxanthotoxin + oxidized [NADPH--hemoprotein reductase] + H2O + 2 H(+). Its pathway is secondary metabolite biosynthesis. In terms of biological role, involved in the biosynthesis of coumarins and furanocoumarins (FCs), natural products required for defense responses against attacks by predators with potential medical and agroindustrial usages such as anticoagulant, rodenticide and artificial vanilla substitutes. Catalyzes the conversion of xanthotoxin into 5-hydroxyxanthotoxin. The protein is 5-OH-xanthotoxin synthase of Ammi majus (Bishop's weed).